A 188-amino-acid chain; its full sequence is Deoxycytidylate deaminase (188 aa).

The region spanning 1–171 is the CMP/dCMP-type deaminase domain; the sequence is MKASTVLQIA…DILRNAGIEV (171 aa). Zn(2+) is bound by residues C19, C49, H94, E102, and H104. E106 (proton donor) is an active-site residue. Positions 132 and 135 each coordinate Zn(2+).

Belongs to the cytidine and deoxycytidylate deaminase family. As to quaternary structure, homohexamer. Zn(2+) is required as a cofactor.

It carries out the reaction dCMP + H2O + H(+) = dUMP + NH4(+). Allosteric enzyme whose activity is greatly influenced by the end products of its metabolic pathway, dCTP and dTTP. Supplies the nucleotide substrate for thymidylate synthetase. The sequence is that of Deoxycytidylate deaminase (CD) from Enterobacteria phage T2 (Bacteriophage T2).